A 243-amino-acid polypeptide reads, in one-letter code: Small ribosomal subunit protein uS3 (243 aa).

The KH type-2 domain maps to 22 to 93; the sequence is LNEFLTRELA…SVELYAEKVA (72 aa). The segment at 195–243 is disordered; it reads QQGKNGPKKPQPDHILVTEPKDEPAPLEPTSDIRSLAPAPLPQPVAAVA.

Belongs to the universal ribosomal protein uS3 family.

The sequence is that of Small ribosomal subunit protein uS3 (RpS3) from Manduca sexta (Tobacco hawkmoth).